A 336-amino-acid polypeptide reads, in one-letter code: Ketol-acid reductoisomerase (NADP(+)) (336 aa).

A KARI N-terminal Rossmann domain is found at 3–183 (AKMYYDRDVD…GCTKAGVLET (181 aa)). NADP(+) is bound by residues 26–29 (YGSQ), R49, S52, S54, and 84–87 (DEQQ). H109 is a catalytic residue. G135 is a binding site for NADP(+). Residues 184–329 (TFKEETETDL…KELRDQMPFI (146 aa)) enclose the KARI C-terminal knotted domain. Mg(2+)-binding residues include D192, E196, E228, and E232. S253 provides a ligand contact to substrate.

This sequence belongs to the ketol-acid reductoisomerase family. Requires Mg(2+) as cofactor.

The enzyme catalyses (2R)-2,3-dihydroxy-3-methylbutanoate + NADP(+) = (2S)-2-acetolactate + NADPH + H(+). It catalyses the reaction (2R,3R)-2,3-dihydroxy-3-methylpentanoate + NADP(+) = (S)-2-ethyl-2-hydroxy-3-oxobutanoate + NADPH + H(+). The protein operates within amino-acid biosynthesis; L-isoleucine biosynthesis; L-isoleucine from 2-oxobutanoate: step 2/4. It functions in the pathway amino-acid biosynthesis; L-valine biosynthesis; L-valine from pyruvate: step 2/4. Functionally, involved in the biosynthesis of branched-chain amino acids (BCAA). Catalyzes an alkyl-migration followed by a ketol-acid reduction of (S)-2-acetolactate (S2AL) to yield (R)-2,3-dihydroxy-isovalerate. In the isomerase reaction, S2AL is rearranged via a Mg-dependent methyl migration to produce 3-hydroxy-3-methyl-2-ketobutyrate (HMKB). In the reductase reaction, this 2-ketoacid undergoes a metal-dependent reduction by NADPH to yield (R)-2,3-dihydroxy-isovalerate. This Deinococcus radiodurans (strain ATCC 13939 / DSM 20539 / JCM 16871 / CCUG 27074 / LMG 4051 / NBRC 15346 / NCIMB 9279 / VKM B-1422 / R1) protein is Ketol-acid reductoisomerase (NADP(+)).